We begin with the raw amino-acid sequence, 82 residues long: Sulfur carrier protein TusA (82 aa).

The active-site Cysteine persulfide intermediate is Cys19.

This sequence belongs to the sulfur carrier protein TusA family.

It localises to the cytoplasm. Its function is as follows. Sulfur carrier protein which probably makes part of a sulfur-relay system. This Vibrio parahaemolyticus serotype O3:K6 (strain RIMD 2210633) protein is Sulfur carrier protein TusA.